A 51-amino-acid chain; its full sequence is UPF0181 protein VV2_0310 (51 aa).

This sequence belongs to the UPF0181 family.

The chain is UPF0181 protein VV2_0310 from Vibrio vulnificus (strain CMCP6).